The chain runs to 291 residues: Methylsterol monooxygenase 1 (291 aa).

Transmembrane regions (helical) follow at residues 55-75 (LIVHELIYFLFCLPGFIFQFL) and 100-120 (MLLFNHFCIQLPLICGTYYFT). Residues 145–274 (CAVIEDTWHY…FTWWDRLFDT (130 aa)) enclose the Fatty acid hydroxylase domain. Positions 157-161 (HRALH) match the Histidine box-1 motif. The Histidine box-2 motif lies at 170-174 (HKVHH). A helical transmembrane segment spans residues 199-219 (FFIGTMVFCNHMILLWAWVTF). The Histidine box-3 motif lies at 249 to 255 (FHDFHHM).

It belongs to the sterol desaturase family. It depends on Fe cation as a cofactor.

Its subcellular location is the endoplasmic reticulum membrane. The enzyme catalyses 4,4-dimethyl-5alpha-cholest-7-en-3beta-ol + 6 Fe(II)-[cytochrome b5] + 3 O2 + 5 H(+) = 4alpha-carboxy-4beta-methyl-5alpha-cholest-7-ene-3beta-ol + 6 Fe(III)-[cytochrome b5] + 4 H2O. It participates in steroid biosynthesis; zymosterol biosynthesis; zymosterol from lanosterol: step 3/6. Functionally, catalyzes the first step in the removal of the two C-4 methyl groups of 4,4-dimethylzymosterol. The polypeptide is Methylsterol monooxygenase 1 (msmo1) (Danio rerio (Zebrafish)).